Here is a 532-residue protein sequence, read N- to C-terminus: BTB/POZ domain-containing protein 3 (532 aa).

The disordered stretch occupies residues 23–54 (KNRSKKSSKKTNTGGGGGGSSSSSSSSSNSKL). Residues 43–53 (SSSSSSSSNSK) show a composition bias toward low complexity. The 71-residue stretch at 130 to 200 (ADVHFVVGPP…IYCDEIDLAA (71 aa)) folds into the BTB domain. Residues 245-310 (FEEPDLTQRC…NWAEVECQRQ (66 aa)) form the BACK domain.

In terms of tissue distribution, expressed in visual cortex. Expressed in visual cortex layer IV neurons.

It localises to the cytoplasm. The protein resides in the cytosol. Its subcellular location is the nucleus. In terms of biological role, acts as a key regulator of dendritic field orientation during development of sensory cortex. Also directs dendrites toward active axon terminals when ectopically expressed. The protein is BTB/POZ domain-containing protein 3 (BTBD3) of Mustela putorius furo (European domestic ferret).